The primary structure comprises 412 residues: Tyrosine--tRNA ligase (412 aa).

Residue Tyr-31 participates in L-tyrosine binding. The 'HIGH' region motif lies at 36 to 45; that stretch reads PTAPSLHIGH. L-tyrosine contacts are provided by Tyr-162 and Gln-166. The 'KMSKS' region signature appears at 222 to 226; it reads KIGKT. Residue Lys-225 participates in ATP binding. The region spanning 345 to 411 is the S4 RNA-binding domain; that stretch reads KRWLDIVVEL…GKRKKQVIDL (67 aa).

Belongs to the class-I aminoacyl-tRNA synthetase family. TyrS type 1 subfamily. As to quaternary structure, homodimer.

It is found in the cytoplasm. It carries out the reaction tRNA(Tyr) + L-tyrosine + ATP = L-tyrosyl-tRNA(Tyr) + AMP + diphosphate + H(+). Catalyzes the attachment of tyrosine to tRNA(Tyr) in a two-step reaction: tyrosine is first activated by ATP to form Tyr-AMP and then transferred to the acceptor end of tRNA(Tyr). In Chlamydia trachomatis serovar A (strain ATCC VR-571B / DSM 19440 / HAR-13), this protein is Tyrosine--tRNA ligase.